A 338-amino-acid polypeptide reads, in one-letter code: Putative clathrin assembly protein At5g10410 (338 aa).

The 131-residue stretch at 27–157 (FGSTAVKYIH…WVPKVLGSFP (131 aa)) folds into the ENTH domain.

It is found in the membrane. The protein localises to the clathrin-coated pit. Its subcellular location is the golgi apparatus. The protein resides in the cytoplasmic vesicle. It localises to the clathrin-coated vesicle. This chain is Putative clathrin assembly protein At5g10410, found in Arabidopsis thaliana (Mouse-ear cress).